The chain runs to 471 residues: Ribulose bisphosphate carboxylase large chain (471 aa).

Substrate is bound by residues N115 and T165. K167 (proton acceptor) is an active-site residue. K169 serves as a coordination point for substrate. Residues K193, D195, and E196 each contribute to the Mg(2+) site. K193 carries the N6-carboxylysine modification. H286 serves as the catalytic Proton acceptor. R287, H319, and S371 together coordinate substrate.

The protein belongs to the RuBisCO large chain family. Type I subfamily. In terms of assembly, heterohexadecamer of 8 large chains and 8 small chains. Mg(2+) is required as a cofactor.

It localises to the carboxysome. It catalyses the reaction 2 (2R)-3-phosphoglycerate + 2 H(+) = D-ribulose 1,5-bisphosphate + CO2 + H2O. It carries out the reaction D-ribulose 1,5-bisphosphate + O2 = 2-phosphoglycolate + (2R)-3-phosphoglycerate + 2 H(+). RuBisCO catalyzes two reactions: the carboxylation of D-ribulose 1,5-bisphosphate, the primary event in carbon dioxide fixation, as well as the oxidative fragmentation of the pentose substrate in the photorespiration process. Both reactions occur simultaneously and in competition at the same active site. In Prochlorococcus marinus (strain MIT 9515), this protein is Ribulose bisphosphate carboxylase large chain.